A 206-amino-acid chain; its full sequence is MGSVGLLYVGAVLFVNGLMLLGTVPVRSASVLNLFVGALQCVVPTVMLIQAQGDSSAVLAASGLYLFGFTYLYVGISNLAGFEPEGIGWFSLFVACAALVYSFLSFTVSNDPVFGVIWLAWAALWTLFFLVLGLGRENLSRFTGWAAILLSQPTCTVPAFLILTGNFHTTPAVAAGWAGALLVLLGLAKILAAPKAAVPQPRPVFN.

The next 7 helical transmembrane spans lie at 4-24, 29-49, 56-76, 86-106, 113-133, 142-162, and 173-193; these read VGLL…LGTV, ASVL…VMLI, SAVL…YVGI, GIGW…FLSF, VFGV…LVLG, FTGW…AFLI, and VAAG…ILAA.

The protein belongs to the AmiS/UreI family.

The protein localises to the cell membrane. Functionally, possible transporter that might be responsible for the adsorption of amidase substrates or release of their hydrolysis products. This chain is Putative transporter protein AmiS2 (amiS2), found in Rhodococcus erythropolis (Arthrobacter picolinophilus).